Consider the following 306-residue polypeptide: Mycothiol acetyltransferase (306 aa).

N-acetyltransferase domains lie at 5–162 and 155–306; these read VWAE…TFVP and VRLR…AQGS. Residues 82–84 and 90–95 contribute to the acetyl-CoA site; these read LIV and RRGHGT. Positions 182, 222, and 238 each coordinate 1D-myo-inositol 2-(L-cysteinylamino)-2-deoxy-alpha-D-glucopyranoside. Residues 242–244 and 249–255 contribute to the acetyl-CoA site; these read VGV and QGGGLGK. Tyr-276 lines the 1D-myo-inositol 2-(L-cysteinylamino)-2-deoxy-alpha-D-glucopyranoside pocket.

It belongs to the acetyltransferase family. MshD subfamily. Monomer.

The catalysed reaction is 1D-myo-inositol 2-(L-cysteinylamino)-2-deoxy-alpha-D-glucopyranoside + acetyl-CoA = mycothiol + CoA + H(+). Its function is as follows. Catalyzes the transfer of acetyl from acetyl-CoA to desacetylmycothiol (Cys-GlcN-Ins) to form mycothiol. This chain is Mycothiol acetyltransferase, found in Saccharomonospora viridis (strain ATCC 15386 / DSM 43017 / JCM 3036 / CCUG 5913 / NBRC 12207 / NCIMB 9602 / P101) (Thermoactinomyces viridis).